Consider the following 281-residue polypeptide: Carbonic anhydrase (281 aa).

The Zn(2+) site is built by Cys-106, His-161, and Cys-164.

Belongs to the beta-class carbonic anhydrase family. Zn(2+) serves as cofactor.

Its subcellular location is the cytoplasm. It is found in the nucleus. It localises to the mitochondrion intermembrane space. It carries out the reaction hydrogencarbonate + H(+) = CO2 + H2O. Its activity is regulated as follows. Amines and amino acids act as activators of catalytic activity, whereas natural product-based phenols, dithiocarbamates, aliphatic and aromatic carboxylates, boronic acids, and sulfonamides act as inhibitors of enzymatic activity. Also inhibited by anions such as cyanide and carbonate, and to a lesser extent by sulfate, phenylboronic, and phenyl arsonic acid. Functionally, catalyzes the reversible hydration of CO(2) to H(2)CO(3). The main role may be to provide inorganic carbon for the bicarbonate-dependent carboxylation reactions catalyzed by pyruvate carboxylase, acetyl-CoA carboxylase and carbamoyl-phosphate synthetase. Involved in protection against oxidative damage. Acts as a CO(2) chemosensor and induces CO(2)-mediated filamentation. Essential for pathological growth in niches where sufficient CO(2) is not supplied by the host. Necessary for white-to-opaque switching at low CO(2) concentrations. The sequence is that of Carbonic anhydrase (NCE103) from Candida albicans (strain SC5314 / ATCC MYA-2876) (Yeast).